The following is an 896-amino-acid chain: Desmocollin-3 (896 aa).

The first 31 residues, 1 to 31 (MVVPEFRSPQCRALCTKLLLTLWVFSFVGEA), serve as a signal peptide directing secretion. Positions 32–135 (CKKVTFHVPS…KETVLRRSKR (104 aa)) are excised as a propeptide. 5 Cadherin domains span residues 136–243 (RWAP…YPLF), 244–355 (TEAI…APTF), 356–472 (RQNT…GPEC), 473–580 (KPPE…EIIQ), and 581–691 (DYIV…TLGK). At 136–695 (RWAPIPCSMQ…GITLGKWAIL (560 aa)) the chain is on the extracellular side. The N-linked (GlcNAc...) asparagine glycan is linked to Asn-166. N-linked (GlcNAc...) asparagine glycosylation is found at Asn-392 and Asn-547. Asn-630 is a glycosylation site (N-linked (GlcNAc...) (high mannose) asparagine). The chain crosses the membrane as a helical span at residues 696 to 716 (AILLGIALLFSVLLTLVCGVV). The Cytoplasmic segment spans residues 717–896 (TARKGKHFPE…LTLAETCTKR (180 aa)).

In terms of assembly, may form homodimers. Interacts with DSG1; there is evidence to suggest that the interaction promotes cell-cell adhesion of keratinocytes. Expressed in the basal layers of epidermal stratified epithelia from birth (at protein level).

It localises to the cell membrane. The protein localises to the cell junction. Its subcellular location is the desmosome. The protein resides in the cytoplasm. A component of desmosome cell-cell junctions which are required for positive regulation of cellular adhesion. Required for cell-cell adhesion in the epidermis, as a result required for the maintenance of the dermal cohesion and the dermal barrier function. Required for cell-cell adhesion of epithelial cell layers surrounding the telogen hair club, as a result plays an important role in telogen hair shaft anchorage. Essential for successful completion of embryo compaction and development beyond the 8-cell stage. This Mus musculus (Mouse) protein is Desmocollin-3 (Dsc3).